A 244-amino-acid chain; its full sequence is 5-oxoprolinase subunit A (244 aa).

The protein belongs to the LamB/PxpA family. In terms of assembly, forms a complex composed of PxpA, PxpB and PxpC.

The catalysed reaction is 5-oxo-L-proline + ATP + 2 H2O = L-glutamate + ADP + phosphate + H(+). In terms of biological role, catalyzes the cleavage of 5-oxoproline to form L-glutamate coupled to the hydrolysis of ATP to ADP and inorganic phosphate. This Salmonella arizonae (strain ATCC BAA-731 / CDC346-86 / RSK2980) protein is 5-oxoprolinase subunit A.